Here is a 213-residue protein sequence, read N- to C-terminus: Imidazole glycerol phosphate synthase subunit HisH (213 aa).

Residues 8–213 enclose the Glutamine amidotransferase type-1 domain; that stretch reads TVALIDYGAG…FLSRFLDWNP (206 aa). The active-site Nucleophile is Cys-91. Active-site residues include His-193 and Glu-195.

Heterodimer of HisH and HisF.

The protein resides in the cytoplasm. It carries out the reaction 5-[(5-phospho-1-deoxy-D-ribulos-1-ylimino)methylamino]-1-(5-phospho-beta-D-ribosyl)imidazole-4-carboxamide + L-glutamine = D-erythro-1-(imidazol-4-yl)glycerol 3-phosphate + 5-amino-1-(5-phospho-beta-D-ribosyl)imidazole-4-carboxamide + L-glutamate + H(+). It catalyses the reaction L-glutamine + H2O = L-glutamate + NH4(+). It participates in amino-acid biosynthesis; L-histidine biosynthesis; L-histidine from 5-phospho-alpha-D-ribose 1-diphosphate: step 5/9. Functionally, IGPS catalyzes the conversion of PRFAR and glutamine to IGP, AICAR and glutamate. The HisH subunit catalyzes the hydrolysis of glutamine to glutamate and ammonia as part of the synthesis of IGP and AICAR. The resulting ammonia molecule is channeled to the active site of HisF. The polypeptide is Imidazole glycerol phosphate synthase subunit HisH (Zymomonas mobilis subsp. mobilis (strain ATCC 31821 / ZM4 / CP4)).